Reading from the N-terminus, the 325-residue chain is 1-aminocyclopropane-1-carboxylate oxidase 2 (325 aa).

A Fe2OG dioxygenase domain is found at 157-257 (PTFGTKVSNY…RMSIASFYNP (101 aa)). 3 residues coordinate Fe cation: histidine 181, aspartate 183, and histidine 238.

Belongs to the iron/ascorbate-dependent oxidoreductase family. Fe cation serves as cofactor.

It carries out the reaction 1-aminocyclopropane-1-carboxylate + L-ascorbate + O2 = ethene + L-dehydroascorbate + hydrogen cyanide + CO2 + 2 H2O. It functions in the pathway alkene biosynthesis; ethylene biosynthesis via S-adenosyl-L-methionine; ethylene from S-adenosyl-L-methionine: step 2/2. The sequence is that of 1-aminocyclopropane-1-carboxylate oxidase 2 (ACO2) from Doritaenopsis sp. (Moth orchid).